The primary structure comprises 392 residues: Phospho-N-acetylmuramoyl-pentapeptide-transferase (392 aa).

11 helical membrane-spanning segments follow: residues 24–44 (YLTL…LIAG), 76–96 (TMGG…WFDL), 100–120 (FVWI…VDDW), 137–157 (YFWQ…SISE), 167–187 (FITW…GLLV), 193–213 (VSYP…IVGS), 225–245 (GLAI…AYVT), 262–282 (SGEL…FLWF), 289–309 (VFMG…IAVI), 314–334 (IVLA…MLQV), and 369–389 (QVVV…LTTL).

The protein belongs to the glycosyltransferase 4 family. MraY subfamily. Mg(2+) serves as cofactor.

The protein resides in the cell inner membrane. It catalyses the reaction UDP-N-acetyl-alpha-D-muramoyl-L-alanyl-gamma-D-glutamyl-meso-2,6-diaminopimeloyl-D-alanyl-D-alanine + di-trans,octa-cis-undecaprenyl phosphate = di-trans,octa-cis-undecaprenyl diphospho-N-acetyl-alpha-D-muramoyl-L-alanyl-D-glutamyl-meso-2,6-diaminopimeloyl-D-alanyl-D-alanine + UMP. It functions in the pathway cell wall biogenesis; peptidoglycan biosynthesis. Catalyzes the initial step of the lipid cycle reactions in the biosynthesis of the cell wall peptidoglycan: transfers peptidoglycan precursor phospho-MurNAc-pentapeptide from UDP-MurNAc-pentapeptide onto the lipid carrier undecaprenyl phosphate, yielding undecaprenyl-pyrophosphoryl-MurNAc-pentapeptide, known as lipid I. The polypeptide is Phospho-N-acetylmuramoyl-pentapeptide-transferase (Acidovorax ebreus (strain TPSY) (Diaphorobacter sp. (strain TPSY))).